A 2726-amino-acid polypeptide reads, in one-letter code: Filamin-C (2726 aa).

Residues 1–260 (MMNNSNYSDA…VMTYLSQFPK (260 aa)) form an actin-binding region. The residue at position 5 (S5) is a Phosphoserine. Calponin-homology (CH) domains follow at residues 37–143 (KIQQ…LHYS) and 160–263 (QTPK…KAKL). 15 Filamin repeats span residues 271–369 (SKQL…EVNV), 371–469 (MALG…PVHV), 470–566 (AEAC…EVQV), 567–659 (SPEA…IAHI), 663–759 (PPDC…RVNV), 760–862 (GEGS…HIKV), 863–961 (DPSH…VVNV), 962–1057 (APPL…AVEG), 1058–1150 (VLPP…KATI), 1151–1245 (QPVF…RVHV), 1246–1345 (QPAV…RVGV), 1346–1438 (TEGC…RVPV), 1439–1534 (KDVV…KIKV), 1535–1631 (LPSH…RIHA), and 1636–1735 (DASK…HVLA). Omega-N-methylarginine is present on R1003. Phosphoserine occurs at positions 1162 and 1339. Positions 1736–1759 (CDPLPHVEEPAEMLQMRQPYAPLR) are hinge 1. Filamin repeat units follow at residues 1760-1855 (PGTC…QFYV), 1856-1947 (DAIN…TAKI), 1948-2034 (TGDD…KILV), and 2037-2129 (SEIG…TVKV). Position 2043 is a phosphoserine (S2043). The interval 2163–2244 (GNWFQMVSAQ…FGSITRQQEG (82 aa)) is intradomain insert; mediate targeting to Z lines. A compositionally biased stretch (basic and acidic residues) spans 2193–2210 (EISKTRGGETKREVRVEE). The segment at 2193–2214 (EISKTRGGETKREVRVEESTQV) is disordered. The stretch at 2212-2307 (TQVGGDPFPA…VPGSPFQFTV (96 aa)) is one Filamin 20; mediates interaction with XIRP1 repeat. Phosphoserine occurs at positions 2234 and 2237. T2239 bears the Phosphothreonine mark. Positions 2241 to 2260 (QQEGEASSQDMTAQVTSPSG) are enriched in polar residues. The disordered stretch occupies residues 2241-2261 (QQEGEASSQDMTAQVTSPSGK). Filamin repeat units lie at residues 2310–2402 (LGEG…VVPV), 2404–2497 (SLSD…KIRV), and 2501–2593 (SQAG…KAKV). The interaction with INPPL1 stretch occupies residues 2404 to 2725 (SLSDDARRLT…VPGSPFKVNV (322 aa)). Phosphoserine is present on residues S2587, S2618, S2621, S2633, S2715, and S2719. Residues 2594–2630 (TGPRLSGGHSLHETSTVLVETVTKSSSSRGASYSSIP) are hinge 2. Residues 2594–2726 (TGPRLSGGHS…PGSPFKVNVP (133 aa)) form a self-association site, tail region. Residues 2631-2725 (KFSSDASKVV…VPGSPFKVNV (95 aa)) form a Filamin 24 repeat.

Belongs to the filamin family. Homodimer; the filamin repeat 24 and the second hinge domain are important for dimer formation. Interacts with FLNB, INPPL1, ITGB1A, KCND2, MYOT, MYOZ1 and MYOZ3. Interacts with sarcoglycans SGCD and SGCG. Interacts (via filament repeats 17-18, 20-21 and 24) with USP25 (isoform USP25m only). Interacts with FBLIM1. Interacts with XIRP1; this interaction is mediated by filamin 20 repeat. Interacts with KY. Interacts with IGFN1. Interacts with MICALL2. Interacts with ANK3. Interacts with MICALL2. Interacts with ANK3. Interacts with SYNPO2. Ubiquitinated by FBXL22, leading to proteasomal degradation.

It is found in the cytoplasm. It localises to the membrane. The protein localises to the cytoskeleton. Its subcellular location is the myofibril. The protein resides in the sarcomere. It is found in the z line. Muscle-specific filamin, which plays a central role in sarcomere assembly and organization. Critical for normal myogenesis, it probably functions as a large actin-cross-linking protein with structural functions at the Z lines in muscle cells. May be involved in reorganizing the actin cytoskeleton in response to signaling events. In Mus musculus (Mouse), this protein is Filamin-C (Flnc).